The primary structure comprises 97 residues: NADH-quinone oxidoreductase subunit K (97 aa).

Helical transmembrane passes span 1–21, 25–45, and 57–77; these read MSEYLILCSILFSLGAFGVLY, ILVMFMCIELMLNSVNLLMVY, and VFVFFIMAVAAAEITIGLAIL.

The protein belongs to the complex I subunit 4L family. As to quaternary structure, NDH-1 is composed of 14 different subunits. Subunits NuoA, H, J, K, L, M, N constitute the membrane sector of the complex.

The protein resides in the cell inner membrane. The catalysed reaction is a quinone + NADH + 5 H(+)(in) = a quinol + NAD(+) + 4 H(+)(out). In terms of biological role, NDH-1 shuttles electrons from NADH, via FMN and iron-sulfur (Fe-S) centers, to quinones in the respiratory chain. The immediate electron acceptor for the enzyme in this species is believed to be a menaquinone. Couples the redox reaction to proton translocation (for every two electrons transferred, four hydrogen ions are translocated across the cytoplasmic membrane), and thus conserves the redox energy in a proton gradient. In Cytophaga hutchinsonii (strain ATCC 33406 / DSM 1761 / CIP 103989 / NBRC 15051 / NCIMB 9469 / D465), this protein is NADH-quinone oxidoreductase subunit K.